The sequence spans 134 residues: ATP synthase epsilon chain (134 aa).

It belongs to the ATPase epsilon chain family. As to quaternary structure, F-type ATPases have 2 components, CF(1) - the catalytic core - and CF(0) - the membrane proton channel. CF(1) has five subunits: alpha(3), beta(3), gamma(1), delta(1), epsilon(1). CF(0) has three main subunits: a, b and c.

The protein resides in the cell membrane. Produces ATP from ADP in the presence of a proton gradient across the membrane. The protein is ATP synthase epsilon chain of Listeria welshimeri serovar 6b (strain ATCC 35897 / DSM 20650 / CCUG 15529 / CIP 8149 / NCTC 11857 / SLCC 5334 / V8).